The primary structure comprises 162 residues: Endoribonuclease YbeY (162 aa).

Zn(2+)-binding residues include His128, His132, and His138.

It belongs to the endoribonuclease YbeY family. Zn(2+) is required as a cofactor.

The protein localises to the cytoplasm. Functionally, single strand-specific metallo-endoribonuclease involved in late-stage 70S ribosome quality control and in maturation of the 3' terminus of the 16S rRNA. This chain is Endoribonuclease YbeY, found in Lactococcus lactis subsp. cremoris (strain MG1363).